The primary structure comprises 162 residues: UPF0260 protein Caul_3920 (162 aa).

This sequence belongs to the UPF0260 family.

In Caulobacter sp. (strain K31), this protein is UPF0260 protein Caul_3920.